The chain runs to 456 residues: Histidine--tRNA ligase (456 aa).

This sequence belongs to the class-II aminoacyl-tRNA synthetase family. Homodimer.

Its subcellular location is the cytoplasm. It carries out the reaction tRNA(His) + L-histidine + ATP = L-histidyl-tRNA(His) + AMP + diphosphate + H(+). The protein is Histidine--tRNA ligase of Cupriavidus taiwanensis (strain DSM 17343 / BCRC 17206 / CCUG 44338 / CIP 107171 / LMG 19424 / R1) (Ralstonia taiwanensis (strain LMG 19424)).